Consider the following 284-residue polypeptide: Phosphatidylserine decarboxylase proenzyme (284 aa).

Catalysis depends on charge relay system; for autoendoproteolytic cleavage activity residues D88, H145, and S251. S251 serves as the catalytic Schiff-base intermediate with substrate; via pyruvic acid; for decarboxylase activity. The residue at position 251 (S251) is a Pyruvic acid (Ser); by autocatalysis.

Belongs to the phosphatidylserine decarboxylase family. PSD-B subfamily. Prokaryotic type I sub-subfamily. In terms of assembly, heterodimer of a large membrane-associated beta subunit and a small pyruvoyl-containing alpha subunit. It depends on pyruvate as a cofactor. Post-translationally, is synthesized initially as an inactive proenzyme. Formation of the active enzyme involves a self-maturation process in which the active site pyruvoyl group is generated from an internal serine residue via an autocatalytic post-translational modification. Two non-identical subunits are generated from the proenzyme in this reaction, and the pyruvate is formed at the N-terminus of the alpha chain, which is derived from the carboxyl end of the proenzyme. The autoendoproteolytic cleavage occurs by a canonical serine protease mechanism, in which the side chain hydroxyl group of the serine supplies its oxygen atom to form the C-terminus of the beta chain, while the remainder of the serine residue undergoes an oxidative deamination to produce ammonia and the pyruvoyl prosthetic group on the alpha chain. During this reaction, the Ser that is part of the protease active site of the proenzyme becomes the pyruvoyl prosthetic group, which constitutes an essential element of the active site of the mature decarboxylase.

The protein resides in the cell membrane. It carries out the reaction a 1,2-diacyl-sn-glycero-3-phospho-L-serine + H(+) = a 1,2-diacyl-sn-glycero-3-phosphoethanolamine + CO2. Its pathway is phospholipid metabolism; phosphatidylethanolamine biosynthesis; phosphatidylethanolamine from CDP-diacylglycerol: step 2/2. Functionally, catalyzes the formation of phosphatidylethanolamine (PtdEtn) from phosphatidylserine (PtdSer). The sequence is that of Phosphatidylserine decarboxylase proenzyme from Polaromonas sp. (strain JS666 / ATCC BAA-500).